Consider the following 353-residue polypeptide: Serine proteinase inhibitor 1 (353 aa).

The protein belongs to the serpin family. Poxviruses subfamily.

It is found in the host cytoplasm. In terms of biological role, plays a role in mediating viral host range. May act to inhibit a caspase independent form of apoptosis to allow efficient virus replication in infected cells. The protein is Serine proteinase inhibitor 1 (OPG208) of Vaccinia virus (strain Western Reserve) (VACV).